A 716-amino-acid chain; its full sequence is Penicillin-binding protein 2A (716 aa).

Residues 22–42 (LNILFLAAFVIFTWIIVELGI) form a helical membrane-spanning segment. Ser-397 (acyl-ester intermediate) is an active-site residue. The segment covering 689-706 (SKQDKEGTQQKNKDKIEE) has biased composition (basic and acidic residues). The interval 689 to 716 (SKQDKEGTQQKNKDKIEENAENTTSSDN) is disordered.

It belongs to the transpeptidase family.

Its subcellular location is the cell membrane. The protein localises to the forespore inner membrane. It carries out the reaction Preferential cleavage: (Ac)2-L-Lys-D-Ala-|-D-Ala. Also transpeptidation of peptidyl-alanyl moieties that are N-acyl substituents of D-alanine.. The protein operates within cell wall biogenesis; peptidoglycan biosynthesis. Involved in the synthesis of peptidoglycan associated with cell wall elongation, especially following spore germination. Has a partially redundant function with PBP 1 (ponA) or PBP 4 (pbpD) during spore outgrowth. Plays a redundant role with PbpH in determining the rod shape of the cell during vegetative growth and spore outgrowth. The sequence is that of Penicillin-binding protein 2A from Bacillus subtilis (strain 168).